We begin with the raw amino-acid sequence, 160 residues long: Cytochrome b6-f complex subunit 4 (160 aa).

3 helical membrane-spanning segments follow: residues Leu-36–Val-56, Leu-95–Glu-115, and Val-131–Ile-151.

This sequence belongs to the cytochrome b family. PetD subfamily. In terms of assembly, the 4 large subunits of the cytochrome b6-f complex are cytochrome b6, subunit IV (17 kDa polypeptide, PetD), cytochrome f and the Rieske protein, while the 4 small subunits are PetG, PetL, PetM and PetN. The complex functions as a dimer.

Its subcellular location is the cellular thylakoid membrane. Functionally, component of the cytochrome b6-f complex, which mediates electron transfer between photosystem II (PSII) and photosystem I (PSI), cyclic electron flow around PSI, and state transitions. The chain is Cytochrome b6-f complex subunit 4 from Prochlorococcus marinus (strain MIT 9515).